Here is a 432-residue protein sequence, read N- to C-terminus: MSLQYQTGFGNACATEALPGALPAGRNSPQICPYGLYAEQLSGTAFTAPRAENRRSWLYRIRPGVQHLPFAPFAGAQRWLSDFGRQPVTPNQLRWSPLPMPDAPTDFIDGMHTWGGNGGPEEQSGVGIHLYAANRSMQGRFFYNADGEMLIVPQQGRLRLATELGLIDIEPYEIAVVPRGVRLRVELLDDVARGYMLENFGTAMRLPELGPIGSNCLANARDFQIPVAWYEDVEGDFELIAKFTGGFWRAPIAHSPLNVVAWHGTHAPYKYDLRNFNTVGSISYDHPDPSIFTVLTSPSDTPGTANMDFAIFPPRILAMENTFRPPWFHRNIASEFMGLIHGVYDAKAEGFAPGGASLHNCMSGHGPDADTFEKASHADTSQAHYIRDTMAFMFETRRVIRPTAQALASPQRQDDYYQCWQGLQKHFDPEQA.

The active-site Proton acceptor is His286. Fe cation is bound by residues His329 and Glu335. Positions 344 and 365 each coordinate homogentisate. His365 is a binding site for Fe cation.

This sequence belongs to the homogentisate dioxygenase family. In terms of assembly, hexamer; dimer of trimers. The cofactor is Fe cation.

It carries out the reaction homogentisate + O2 = 4-maleylacetoacetate + H(+). Its pathway is amino-acid degradation; L-phenylalanine degradation; acetoacetate and fumarate from L-phenylalanine: step 4/6. Involved in the catabolism of homogentisate (2,5-dihydroxyphenylacetate or 2,5-OH-PhAc), a central intermediate in the degradation of phenylalanine and tyrosine. Catalyzes the oxidative ring cleavage of the aromatic ring of homogentisate to yield maleylacetoacetate. This Bordetella bronchiseptica (strain ATCC BAA-588 / NCTC 13252 / RB50) (Alcaligenes bronchisepticus) protein is Homogentisate 1,2-dioxygenase.